Reading from the N-terminus, the 238-residue chain is Ribonuclease 3 (238 aa).

The 130-residue stretch at 10–139 folds into the RNase III domain; the sequence is FKQFQEQTGI…FIGALYLDQG (130 aa). Glutamate 52 lines the Mg(2+) pocket. Aspartate 56 is an active-site residue. Positions 125 and 128 each coordinate Mg(2+). Glutamate 128 is a catalytic residue. Residues 165–234 enclose the DRBM domain; that stretch reads DYKSQLQEFV…AQMALAKLKQ (70 aa).

This sequence belongs to the ribonuclease III family. Homodimer. It depends on Mg(2+) as a cofactor.

The protein resides in the cytoplasm. The catalysed reaction is Endonucleolytic cleavage to 5'-phosphomonoester.. In terms of biological role, digests double-stranded RNA. Involved in the processing of primary rRNA transcript to yield the immediate precursors to the large and small rRNAs (23S and 16S). Processes some mRNAs, and tRNAs when they are encoded in the rRNA operon. Processes pre-crRNA and tracrRNA of type II CRISPR loci if present in the organism. This Anoxybacillus flavithermus (strain DSM 21510 / WK1) protein is Ribonuclease 3.